The primary structure comprises 535 residues: Cytochrome P450 monooxygenase BOA7 (535 aa).

The chain crosses the membrane as a helical span at residues 20-37 (SIFLILGFFVLAAILIAW). Asn65, Asn148, Asn180, and Asn420 each carry an N-linked (GlcNAc...) asparagine glycan. Residue Cys478 coordinates heme.

Belongs to the cytochrome P450 family. It depends on heme as a cofactor.

It localises to the membrane. Its pathway is polyketide biosynthesis. Functionally, cytochrome P450 monooxygenase; part of the gene cluster B that mediates the biosynthesis of botcinic acid and its botcinin derivatives, acetate-derived polyketides that contribute to virulence when combined with the sesquiterpene botrydial. Botcinic acid and its derivatives have been shown to induce chlorosis and necrosis during host plant infection, but also have antifungal activities. Two polyketide synthases, BOA6 and BOA9, are involved in the biosynthesis of botcinins. BOA6 mediates the formation of the per-methylated tetraketide core by condensation of four units of malonyl-CoA with one unit of acetyl-CoA, which would be methylated in activated methylene groups to yield a bicyclic acid intermediate that could then either be converted to botrylactone derivatives or lose the starter acetate unit through a retro-Claisen type C-C bond cleavage to yield botcinin derivatives. The second polyketide synthase, BOA9, is probably required for the biosynthesis of the tetraketide side chain of botcinins. The methyltransferase (MT) domain within BOA6 is probably responsible for the incorporation of four methyl groups. The trans-enoyl reductase BOA5 might take over the enoyl reductase function of BOA6 that misses an ER domain. The monooxygenases BOA2, BOA3 and BOA4 might be involved in further hydroxylations at C4, C5 and C8, whereas BOA7, close to BOA9, could potentially be involved in the hydroxylation at C4 in the side chain of botcinins. This Botryotinia fuckeliana (strain B05.10) (Noble rot fungus) protein is Cytochrome P450 monooxygenase BOA7.